Consider the following 200-residue polypeptide: Holliday junction branch migration complex subunit RuvA (200 aa).

The tract at residues 1 to 64 is domain I; sequence MIAKLKGLLD…ENDMRLLGFA (64 aa). A domain II region spans residues 65–143; it reads EASERDWFRL…ALPSAPGGAA (79 aa). A flexible linker region spans residues 144 to 154; the sequence is MAANPAGGASA. The tract at residues 154–200 is domain III; that stretch reads ADAVSALENLGFKPAIAARAVATAQGELGEGASESELIRVALKRAAG.

It belongs to the RuvA family. As to quaternary structure, homotetramer. Forms an RuvA(8)-RuvB(12)-Holliday junction (HJ) complex. HJ DNA is sandwiched between 2 RuvA tetramers; dsDNA enters through RuvA and exits via RuvB. An RuvB hexamer assembles on each DNA strand where it exits the tetramer. Each RuvB hexamer is contacted by two RuvA subunits (via domain III) on 2 adjacent RuvB subunits; this complex drives branch migration. In the full resolvosome a probable DNA-RuvA(4)-RuvB(12)-RuvC(2) complex forms which resolves the HJ.

The protein localises to the cytoplasm. Functionally, the RuvA-RuvB-RuvC complex processes Holliday junction (HJ) DNA during genetic recombination and DNA repair, while the RuvA-RuvB complex plays an important role in the rescue of blocked DNA replication forks via replication fork reversal (RFR). RuvA specifically binds to HJ cruciform DNA, conferring on it an open structure. The RuvB hexamer acts as an ATP-dependent pump, pulling dsDNA into and through the RuvAB complex. HJ branch migration allows RuvC to scan DNA until it finds its consensus sequence, where it cleaves and resolves the cruciform DNA. This Erythrobacter litoralis (strain HTCC2594) protein is Holliday junction branch migration complex subunit RuvA.